Consider the following 424-residue polypeptide: Acetyl-CoA acetyltransferase, mitochondrial (424 aa).

The transit peptide at 1–30 directs the protein to the mitochondrion; it reads MAALVALHGVVRRPLLRGLLQEVRCLERSY. The residue at position 63 (K63) is an N6-acetyllysine; alternate. K63 is modified (N6-succinyllysine; alternate). K75 carries the N6-succinyllysine modification. C123 serves as the catalytic Acyl-thioester intermediate. N6-acetyllysine; alternate is present on residues K171, K178, K187, and K199. N6-succinyllysine; alternate is present on residues K171, K178, K187, and K199. S204 is modified (phosphoserine). Y216 is a binding site for CoA. Y216 serves as a coordination point for K(+). 2 positions are modified to N6-acetyllysine; alternate: K220 and K227. K220 and K227 each carry N6-succinyllysine; alternate. K240 carries the post-translational modification N6-succinyllysine. Residue K242 is modified to N6-acetyllysine; alternate. An N6-succinyllysine; alternate modification is found at K242. An N6-acetyllysine mark is found at K248 and K254. CoA contacts are provided by residues 255–257 and K260; that span reads RVD. K260 bears the N6-acetyllysine; alternate mark. At K260 the chain carries N6-succinyllysine; alternate. N6-succinyllysine is present on residues K263 and K265. K270 carries the N6-acetyllysine modification. K(+) contacts are provided by A277, A278, and A280. S281 is a CoA binding site. Residue K335 is modified to N6-acetyllysine. V378 contributes to the K(+) binding site. C410 (proton donor/acceptor) is an active-site residue.

The protein belongs to the thiolase-like superfamily. Thiolase family. As to quaternary structure, homotetramer. In terms of processing, succinylation at Lys-265, adjacent to a coenzyme A binding site. Desuccinylated by SIRT5.

The protein localises to the mitochondrion. The enzyme catalyses 2 acetyl-CoA = acetoacetyl-CoA + CoA. It catalyses the reaction propanoyl-CoA + acetyl-CoA = 2-methyl-3-oxobutanoyl-CoA + CoA. It functions in the pathway lipid metabolism; fatty acid beta-oxidation. Activated by potassium ions, but not sodium ions. In terms of biological role, this is one of the enzymes that catalyzes the last step of the mitochondrial beta-oxidation pathway, an aerobic process breaking down fatty acids into acetyl-CoA. Using free coenzyme A/CoA, catalyzes the thiolytic cleavage of medium- to long-chain 3-oxoacyl-CoAs into acetyl-CoA and a fatty acyl-CoA shortened by two carbon atoms. The activity of the enzyme is reversible and it can also catalyze the condensation of two acetyl-CoA molecules into acetoacetyl-CoA. Thereby, it plays a major role in ketone body metabolism. The sequence is that of Acetyl-CoA acetyltransferase, mitochondrial (Acat1) from Mus musculus (Mouse).